We begin with the raw amino-acid sequence, 179 residues long: Fimbrial subunit ElfA (179 aa).

The first 21 residues, 1-21, serve as a signal peptide directing secretion; the sequence is MKKSVLTAFITVVCATSSVMA.

Belongs to the fimbrial protein family.

The protein localises to the fimbrium. Its function is as follows. Part of the elfADCG-ycbUVF fimbrial operon, which promotes adhesion of bacteria to different abiotic surfaces. ElfA is the major fimbrial subunit produced by this operon. The protein is Fimbrial subunit ElfA (elfA) of Escherichia coli (strain K12).